The chain runs to 62 residues: MLILTRRVGETLMIGDDVSVTVLGVKGNQVRIGVNAPKDVSVHREEIYMRIQSEKDDEQDKE.

The protein belongs to the CsrA/RsmA family. In terms of assembly, homodimer; the beta-strands of each monomer intercalate to form a hydrophobic core, while the alpha-helices form wings that extend away from the core.

Its subcellular location is the cytoplasm. Functionally, a key translational regulator that binds mRNA to regulate translation initiation and/or mRNA stability. Mediates global changes in gene expression, shifting from rapid growth to stress survival by linking envelope stress, the stringent response and the catabolite repression systems. Usually binds in the 5'-UTR; binding at or near the Shine-Dalgarno sequence prevents ribosome-binding, repressing translation, binding elsewhere in the 5'-UTR can activate translation and/or stabilize the mRNA. Its function is antagonized by small RNA(s). The sequence is that of Translational regulator CsrA from Idiomarina loihiensis (strain ATCC BAA-735 / DSM 15497 / L2-TR).